We begin with the raw amino-acid sequence, 85 residues long: Large ribosomal subunit protein bL27 (85 aa).

A disordered region spans residues 1-21 (MAHKKGVGSSKNGRESESKRL).

Belongs to the bacterial ribosomal protein bL27 family.

The chain is Large ribosomal subunit protein bL27 from Porphyromonas gingivalis (strain ATCC 33277 / DSM 20709 / CIP 103683 / JCM 12257 / NCTC 11834 / 2561).